We begin with the raw amino-acid sequence, 435 residues long: E3 ubiquitin-protein ligase RING1 (435 aa).

An RING-type zinc finger spans residues 46–86; it reads CPICLDMLKKTMTTKECLHRFCSDCIVTALRSGNKECPTCR. The segment at 144–322 is disordered; it reads KLQSQNRPQR…TEGEGNGELG (179 aa). Positions 157–170 are enriched in gly residues; sequence KGGGGGGGGGGNGN. 4 stretches are compositionally biased toward low complexity: residues 171–188, 202–211, 222–251, and 259–278; these read GAAN…TAVG, SNDSNSNTNS, SGTS…TSAT, and SNPP…SSSS. Phosphoserine is present on Ser202. Ser266 carries the post-translational modification Phosphoserine. Thr267 carries the phosphothreonine modification. Ser269 is modified (phosphoserine). Over residues 309–322 the composition is skewed to acidic residues; that stretch reads SNIDTEGEGNGELG.

In terms of assembly, interacts with ORD. Component of PRC1 complex, which contains many PcG proteins like Pc, ph, Scm, Psc, Sce and also chromatin remodeling proteins such as histone deacetylases. This complex is distinct from the Esc/E(z) complex, at least composed of esc, E(z), Su(z)12, HDAC1/Rpd3 and Caf1-55. The two complexes however cooperate and interact together during the first 3 hours of development to establish PcG silencing. In terms of tissue distribution, ubiquitously expressed in syncytial blastoderm embryos. Ubiquitously expressed until stage 11. Then, it is only expressed in the neuroectoderm. Later in embryonic development, it is only expressed in the CNS. In larvae, it is expressed in all imaginal disks. Expressed in the male and female gonads.

Its subcellular location is the nucleus. The protein resides in the chromosome. It carries out the reaction S-ubiquitinyl-[E2 ubiquitin-conjugating enzyme]-L-cysteine + [acceptor protein]-L-lysine = [E2 ubiquitin-conjugating enzyme]-L-cysteine + N(6)-ubiquitinyl-[acceptor protein]-L-lysine.. Its pathway is protein modification; protein ubiquitination. Its function is as follows. E3 ubiquitin-protein ligase that mediates monoubiquitination of 'Lys-118' of histone H2A, thereby playing a central role in histone code and gene regulation. H2A 'Lys-118' ubiquitination gives a specific tag for epigenetic transcriptional repression. Polycomb group (PcG) protein. PcG proteins act by forming multiprotein complexes, which are required to maintain the transcriptionally repressive state of homeotic genes throughout development. PcG proteins are not required to initiate repression, but to maintain it during later stages of development. PcG complexes act via modification of histones, such as methylation, deacetylation, ubiquitination rendering chromatin heritably changed in its expressibility. May play a role in meiotic sister chromatid cohesion. The sequence is that of E3 ubiquitin-protein ligase RING1 (Sce) from Drosophila melanogaster (Fruit fly).